Consider the following 206-residue polypeptide: Holliday junction branch migration complex subunit RuvA (206 aa).

Residues M1–R64 form a domain I region. Positions T65 to I144 are domain II. The segment at G145–V154 is flexible linker. Residues V154–R206 form a domain III region.

The protein belongs to the RuvA family. In terms of assembly, homotetramer. Forms an RuvA(8)-RuvB(12)-Holliday junction (HJ) complex. HJ DNA is sandwiched between 2 RuvA tetramers; dsDNA enters through RuvA and exits via RuvB. An RuvB hexamer assembles on each DNA strand where it exits the tetramer. Each RuvB hexamer is contacted by two RuvA subunits (via domain III) on 2 adjacent RuvB subunits; this complex drives branch migration. In the full resolvosome a probable DNA-RuvA(4)-RuvB(12)-RuvC(2) complex forms which resolves the HJ.

The protein localises to the cytoplasm. In terms of biological role, the RuvA-RuvB-RuvC complex processes Holliday junction (HJ) DNA during genetic recombination and DNA repair, while the RuvA-RuvB complex plays an important role in the rescue of blocked DNA replication forks via replication fork reversal (RFR). RuvA specifically binds to HJ cruciform DNA, conferring on it an open structure. The RuvB hexamer acts as an ATP-dependent pump, pulling dsDNA into and through the RuvAB complex. HJ branch migration allows RuvC to scan DNA until it finds its consensus sequence, where it cleaves and resolves the cruciform DNA. This Chelativorans sp. (strain BNC1) protein is Holliday junction branch migration complex subunit RuvA.